A 334-amino-acid polypeptide reads, in one-letter code: Cytoskeleton protein RodZ (334 aa).

Over 1–111 the chain is Cytoplasmic; it reads MNTEATHDQN…LGKRRKKRDG (111 aa). One can recognise an HTH cro/C1-type domain in the interval 19 to 71; the sequence is LRNAREQLGLSQQAVAERLCLKVSTVRDIEEDKAPSDLASTFLRGYIRSYARL. A DNA-binding region (H-T-H motif) is located at residues 30–49; it reads QQAVAERLCLKVSTVRDIEE. The chain crosses the membrane as a helical; Signal-anchor for type II membrane protein span at residues 112–132; the sequence is WLMSFTWLVLFVVVGLTGAWW. Residues 133 to 334 are Periplasmic-facing; it reads WQNHKAQQEE…TLNAEPTPAQ (202 aa). Disordered stretches follow at residues 155 to 207 and 221 to 241; these read NADK…ATQN and ATSAAPAATETPSALPTSQAG. The segment covering 176–207 has biased composition (low complexity); that stretch reads TTPAQTAPAPATPVDSTAATQTPAATATATQN.

It belongs to the RodZ family.

Its subcellular location is the cell inner membrane. Its function is as follows. Cytoskeletal protein that is involved in cell-shape control through regulation of the length of the long axis. The sequence is that of Cytoskeleton protein RodZ from Salmonella schwarzengrund (strain CVM19633).